Here is a 360-residue protein sequence, read N- to C-terminus: Phospho-N-acetylmuramoyl-pentapeptide-transferase (360 aa).

10 consecutive transmembrane segments (helical) span residues 27-47 (IVSL…LIAW), 72-92 (PTMG…MWAY), 94-114 (SNPY…VGFI), 132-152 (WKYF…FAVG), 168-188 (IMPQ…VGTS), 199-219 (GLAI…AWAT), 235-255 (FAGE…GFLW), 263-283 (VFMG…IAVL), 288-308 (FLLL…ILQV), and 338-358 (VIVR…ATLK).

This sequence belongs to the glycosyltransferase 4 family. MraY subfamily. Mg(2+) serves as cofactor.

It localises to the cell inner membrane. The catalysed reaction is UDP-N-acetyl-alpha-D-muramoyl-L-alanyl-gamma-D-glutamyl-meso-2,6-diaminopimeloyl-D-alanyl-D-alanine + di-trans,octa-cis-undecaprenyl phosphate = di-trans,octa-cis-undecaprenyl diphospho-N-acetyl-alpha-D-muramoyl-L-alanyl-D-glutamyl-meso-2,6-diaminopimeloyl-D-alanyl-D-alanine + UMP. The protein operates within cell wall biogenesis; peptidoglycan biosynthesis. Functionally, catalyzes the initial step of the lipid cycle reactions in the biosynthesis of the cell wall peptidoglycan: transfers peptidoglycan precursor phospho-MurNAc-pentapeptide from UDP-MurNAc-pentapeptide onto the lipid carrier undecaprenyl phosphate, yielding undecaprenyl-pyrophosphoryl-MurNAc-pentapeptide, known as lipid I. The chain is Phospho-N-acetylmuramoyl-pentapeptide-transferase from Sodalis glossinidius (strain morsitans).